The primary structure comprises 831 residues: Prickle-like protein 1 (831 aa).

One can recognise a PET domain in the interval 14–122; it reads FGCQRSSTSD…TIKLLSRAMM (109 aa). 3 LIM zinc-binding domains span residues 124-189, 189-249, and 249-313; these read AVCE…LLKP, PRCS…LYAE, and EYCE…EDIH. The disordered stretch occupies residues 314 to 346; that stretch reads ASDSSDSAFQSARSRDSRRSVRMGRSSRSADQC. Residues serine 315, serine 591, and serine 594 each carry the phosphoserine modification. 2 disordered regions span residues 664–688 and 763–831; these read EERGSRPHHHRHRRSRKSRSDNALN and CSSS…CIIS. A compositionally biased stretch (basic residues) spans 669–680; the sequence is RPHHHRHRRSRK. Serine 683 carries the phosphoserine modification. Residues 797 to 812 are compositionally biased toward polar residues; it reads DLSSPASALPTPQFNQ. The segment covering 815 to 831 has biased composition (basic residues); sequence TKSKKKKGHRGKNCIIS. Cysteine 828 carries the post-translational modification Cysteine methyl ester. Residue cysteine 828 is the site of S-farnesyl cysteine attachment. Positions 829–831 are cleaved as a propeptide — removed in mature form; it reads IIS.

The protein belongs to the prickle / espinas / testin family. In terms of assembly, interacts with REST.

The protein localises to the nucleus membrane. Its subcellular location is the cytoplasm. It is found in the cytosol. Functionally, involved in the planar cell polarity pathway that controls convergent extension during gastrulation and neural tube closure. Convergent extension is a complex morphogenetic process during which cells elongate, move mediolaterally, and intercalate between neighboring cells, leading to convergence toward the mediolateral axis and extension along the anteroposterior axis. Necessary for nuclear localization of REST. May serve as nuclear receptor. This Rattus norvegicus (Rat) protein is Prickle-like protein 1 (Prickle1).